The chain runs to 192 residues: 7-methyl-GTP pyrophosphatase (192 aa).

Asp-70 (proton acceptor) is an active-site residue.

This sequence belongs to the Maf family. YceF subfamily. The cofactor is a divalent metal cation.

The protein localises to the cytoplasm. The catalysed reaction is N(7)-methyl-GTP + H2O = N(7)-methyl-GMP + diphosphate + H(+). Its function is as follows. Nucleoside triphosphate pyrophosphatase that hydrolyzes 7-methyl-GTP (m(7)GTP). May have a dual role in cell division arrest and in preventing the incorporation of modified nucleotides into cellular nucleic acids. The chain is 7-methyl-GTP pyrophosphatase from Xanthomonas campestris pv. campestris (strain 8004).